Consider the following 554-residue polypeptide: CTP synthase (554 aa).

The amidoligase domain stretch occupies residues 1 to 265 (MTPLIFVTGG…DELVIDQFKL (265 aa)). CTP is bound at residue Ser-13. UTP is bound at residue Ser-13. Residues 14–19 (SLGKGI) and Asp-71 each bind ATP. Mg(2+)-binding residues include Asp-71 and Glu-139. CTP contacts are provided by residues 146–148 (DIE), 186–191 (KTKPTQ), and Lys-222. UTP contacts are provided by residues 186 to 191 (KTKPTQ) and Lys-222. Residues 292–545 (TIAVVGKYVD…VRAAREKKAG (254 aa)) enclose the Glutamine amidotransferase type-1 domain. Gly-353 lines the L-glutamine pocket. Cys-380 functions as the Nucleophile; for glutamine hydrolysis in the catalytic mechanism. L-glutamine is bound by residues 381–384 (YGMQ), Glu-404, and Arg-471. Catalysis depends on residues His-518 and Glu-520.

Belongs to the CTP synthase family. Homotetramer.

It carries out the reaction UTP + L-glutamine + ATP + H2O = CTP + L-glutamate + ADP + phosphate + 2 H(+). It catalyses the reaction L-glutamine + H2O = L-glutamate + NH4(+). The catalysed reaction is UTP + NH4(+) + ATP = CTP + ADP + phosphate + 2 H(+). It functions in the pathway pyrimidine metabolism; CTP biosynthesis via de novo pathway; CTP from UDP: step 2/2. Its activity is regulated as follows. Allosterically activated by GTP, when glutamine is the substrate; GTP has no effect on the reaction when ammonia is the substrate. The allosteric effector GTP functions by stabilizing the protein conformation that binds the tetrahedral intermediate(s) formed during glutamine hydrolysis. Inhibited by the product CTP, via allosteric rather than competitive inhibition. In terms of biological role, catalyzes the ATP-dependent amination of UTP to CTP with either L-glutamine or ammonia as the source of nitrogen. Regulates intracellular CTP levels through interactions with the four ribonucleotide triphosphates. The protein is CTP synthase of Xanthomonas campestris pv. campestris (strain B100).